We begin with the raw amino-acid sequence, 1391 residues long: Leucine-rich PPR motif-containing protein, mitochondrial (1391 aa).

A mitochondrion-targeting transit peptide spans 1-42 (MSALLAGARFLLRPGLRALPAPCVRLSPGQGRYLNNTPGHFA). 15 PPR repeats span residues 110 to 144 (LLRS…GAVF), 145 to 179 (DVSH…NVQP), 180 to 214 (NRVT…DLPI), 215 to 249 (TEAV…GIEP), 250 to 284 (GPET…EGSL), 389 to 425 (NLHS…GMPV), 704 to 738 (AIGT…DSSA), 741 to 775 (DTSK…DVPL), 779 to 813 (TTTS…GLAK), 815 to 850 (TSNL…NCMP), 948 to 982 (RDDM…NVIP), 1028 to 1062 (PESS…GTAM), 1063 to 1093 (SASA…AENH), 1100 to 1134 (NDAA…DKVP), and 1310 to 1344 (RETA…SVSP). An RNA-binding region spans residues 1118-1387 (KDALASLKAM…KLKKDKADSY (270 aa)).

Its subcellular location is the mitochondrion. It is found in the nucleus. In terms of biological role, may play a role in RNA metabolism in both nuclei and mitochondria. May bind mature mRNA in the nucleus outer membrane. In mitochondria binds to poly(A) mRNA. May be involved in transcription regulation. Binds single-stranded DNA. In Xenopus tropicalis (Western clawed frog), this protein is Leucine-rich PPR motif-containing protein, mitochondrial (lrpprc).